We begin with the raw amino-acid sequence, 40 residues long: Potassium channel toxin alpha-KTx 12.3 (40 aa).

Intrachain disulfides connect Cys2–Cys5, Cys10–Cys31, Cys16–Cys36, and Cys20–Cys38.

Expressed by the venom gland.

It is found in the secreted. Its function is as follows. Inhibits high conductance calcium-activated potassium channels (KCNMA). Inhibits Shaker B potassium channels. In Tityus costatus (Brazilian scorpion), this protein is Potassium channel toxin alpha-KTx 12.3.